Reading from the N-terminus, the 165-residue chain is Small ribosomal subunit protein uS5 (165 aa).

One can recognise an S5 DRBM domain in the interval 10–73 (LNEKLIAVNR…EKARRNMVTV (64 aa)).

Belongs to the universal ribosomal protein uS5 family. Part of the 30S ribosomal subunit. Contacts proteins S4 and S8.

Functionally, with S4 and S12 plays an important role in translational accuracy. Located at the back of the 30S subunit body where it stabilizes the conformation of the head with respect to the body. The sequence is that of Small ribosomal subunit protein uS5 from Photobacterium profundum (strain SS9).